A 450-amino-acid polypeptide reads, in one-letter code: UDP-N-acetylmuramoylalanine--D-glutamate ligase (450 aa).

119 to 125 (GSNGKTT) is a binding site for ATP.

It belongs to the MurCDEF family.

It is found in the cytoplasm. The catalysed reaction is UDP-N-acetyl-alpha-D-muramoyl-L-alanine + D-glutamate + ATP = UDP-N-acetyl-alpha-D-muramoyl-L-alanyl-D-glutamate + ADP + phosphate + H(+). It participates in cell wall biogenesis; peptidoglycan biosynthesis. Functionally, cell wall formation. Catalyzes the addition of glutamate to the nucleotide precursor UDP-N-acetylmuramoyl-L-alanine (UMA). In Bacillus cereus (strain Q1), this protein is UDP-N-acetylmuramoylalanine--D-glutamate ligase.